We begin with the raw amino-acid sequence, 161 residues long: Effector CFEM5 (161 aa).

The N-terminal stretch at 1-23 (MFSLTKSVLFTSIVAIAAQATTA) is a signal peptide. Residues 24–126 (VSSPTQTSLP…KVLDAVVASA (103 aa)) form the CFEM domain. Disulfide bonds link Cys46/Cys78, Cys56/Cys63, and Cys65/Cys100. A heme-binding site is contributed by Asp60.

The protein belongs to the RBT5 family. As to quaternary structure, interacts with Z.mays LRR5; the interaction is direct. Interacts with Z.mays WAK17 isoform 2; the interaction is direct.

It is found in the membrane. The protein localises to the secreted. In terms of biological role, suppresses host programmed cell death during infection by binding to Z.mays WAK17 isoform 2 and Z.mays LRR5, to prevent activation of Z.mays WAK17 isoform 1 and the downstream hypersensitive response. The sequence is that of Effector CFEM5 from Gibberella zeae (strain ATCC MYA-4620 / CBS 123657 / FGSC 9075 / NRRL 31084 / PH-1) (Wheat head blight fungus).